The primary structure comprises 92 residues: Small ribosomal subunit protein uS19 (92 aa).

It belongs to the universal ribosomal protein uS19 family.

Functionally, protein S19 forms a complex with S13 that binds strongly to the 16S ribosomal RNA. The sequence is that of Small ribosomal subunit protein uS19 from Baumannia cicadellinicola subsp. Homalodisca coagulata.